Here is a 121-residue protein sequence, read N- to C-terminus: Large ribosomal subunit protein bL19 (121 aa).

This sequence belongs to the bacterial ribosomal protein bL19 family.

In terms of biological role, this protein is located at the 30S-50S ribosomal subunit interface and may play a role in the structure and function of the aminoacyl-tRNA binding site. The protein is Large ribosomal subunit protein bL19 of Mesomycoplasma hyopneumoniae (strain 7448) (Mycoplasma hyopneumoniae).